The following is a 188-amino-acid chain: Peptidyl-tRNA hydrolase (188 aa).

Tyrosine 17 is a binding site for tRNA. Catalysis depends on histidine 22, which acts as the Proton acceptor. Positions 65, 67, and 113 each coordinate tRNA.

Belongs to the PTH family. In terms of assembly, monomer.

The protein resides in the cytoplasm. It catalyses the reaction an N-acyl-L-alpha-aminoacyl-tRNA + H2O = an N-acyl-L-amino acid + a tRNA + H(+). Hydrolyzes ribosome-free peptidyl-tRNAs (with 1 or more amino acids incorporated), which drop off the ribosome during protein synthesis, or as a result of ribosome stalling. In terms of biological role, catalyzes the release of premature peptidyl moieties from peptidyl-tRNA molecules trapped in stalled 50S ribosomal subunits, and thus maintains levels of free tRNAs and 50S ribosomes. This chain is Peptidyl-tRNA hydrolase, found in Mycoplasma pneumoniae (strain ATCC 29342 / M129 / Subtype 1) (Mycoplasmoides pneumoniae).